Here is a 130-residue protein sequence, read N- to C-terminus: Metastasis-suppressor KiSS-1 (130 aa).

A signal peptide spans 1 to 19; sequence MISMASWQLLLLLCVATYG. A disordered region spans residues 49 to 82; the sequence is KESRYAESKPGSAGLRARRSSPCPPVEGPAGRQR. The cysteines at positions 71 and 85 are disulfide-linked. Y110 is subject to Phosphotyrosine. Residues 110 to 119 form an essential for receptor binding and receptor activation region; sequence YNWNSFGLRY. At Y119 the chain carries Tyrosine amide.

This sequence belongs to the KISS1 family. In terms of tissue distribution, weak in all tissue types with highest levels in lung and 15- 17-day embryos. Expressed in areas of the hypothalamus implicated in the neuroendocrine regulation of gonadotropin secretion, including the anteroventral periventricular nucleus, the periventricular nucleus, and the arcuate nucleus.

It localises to the secreted. Functionally, metastasis suppressor protein. May regulate events downstream of cell-matrix adhesion, perhaps involving cytoskeletal reorganization. Generates a C-terminally amidated peptide, metastin which functions as the endogenous ligand of the G-protein coupled receptor GPR54. Activation of the receptor inhibits cell proliferation and cell migration, key characteristics of tumor metastasis. The receptor is also essential for normal gonadotropin-released hormone physiology and for puberty. The hypothalamic KiSS1/GPR54 system is a pivotal factor in central regulation of the gonadotropic axis at puberty and in adulthood. Intracerebroventricular administration induces an increase in serum LH and FSH levels in prepubertal male and female as well as in adult animals. This chain is Metastasis-suppressor KiSS-1 (Kiss1), found in Mus musculus (Mouse).